Here is a 280-residue protein sequence, read N- to C-terminus: Ycf3-interacting protein 1, chloroplastic (280 aa).

The N-terminal 62 residues, 1–62 (MTTQIFQLPL…NNRRFGSLIV (62 aa)), are a transit peptide targeting the chloroplast. Residues 75-103 (PVPLTLEQQEKEKQNRDDEEDEIDEGDVD) are disordered. Positions 91–103 (DDEEDEIDEGDVD) are enriched in acidic residues. Residues 255 to 275 (ALYFVSALPVIIGISVVLILF) traverse the membrane as a helical segment.

It belongs to the Y3IP1/CEST family. As to quaternary structure, interacts with Ycf3. As to expression, expressed in cotyledons, rosette and cauline leaves, stems and sepals.

Its subcellular location is the plastid. The protein resides in the chloroplast thylakoid membrane. Functionally, nuclear genome-encoded factor that participates in photosystem I (PSI) biogenesis. Cooperates with the plastid genome-encoded protein PSI assembly Ycf3 in the assembly of stable PSI units in the thylakoid membrane. Involved in light-induced chloroplast development and growth. Involved in the plant response to abiotic and photooxidative stresses. May be involved in the suppression of photooxidative damage. The sequence is that of Ycf3-interacting protein 1, chloroplastic from Arabidopsis thaliana (Mouse-ear cress).